The chain runs to 585 residues: Optineurin (585 aa).

Residues 1 to 32 (MSHQPLSCLTEKGDSSCETPGNGPSNMVHPNL) are disordered. The span at 16–25 (SCETPGNGPS) shows a compositional bias: polar residues. Positions 38-181 (EELLQQMKEL…VSELQLKLNS (144 aa)) form a coiled coil. Positions 58–220 (MKLNNQAMKG…GPTRTDSISM (163 aa)) are interaction with Rab8. The LIR motif lies at 187-192 (DSFVEI). 2 positions are modified to phosphoserine: serine 188 and serine 209. 2 disordered regions span residues 200 to 220 (EGAM…SISM) and 269 to 299 (FEKK…PESV). Residues 244 to 512 (CLREGNQKVE…LLKENNDFED (269 aa)) adopt a coiled-coil conformation. Residue serine 346 is modified to Phosphoserine. The segment at 415–585 (TKQQAEKVDK…LQIHVMDCII (171 aa)) is interaction with HD. The interval 416–525 (KQQAEKVDKV…RQSLMEMQCR (110 aa)) is interaction with MYO6. A UBAN motif is present at residues 478–483 (DFHAER). Serine 531 bears the Phosphoserine mark. The CCHC NOA-type zinc-finger motif lies at 555-585 (PRSIPIHSCPKCGEVLPDIDTLQIHVMDCII). Zn(2+) contacts are provided by cysteine 563, cysteine 566, histidine 579, and cysteine 583.

As to quaternary structure, self-associates. Interacts with HD. Interacts with GTF3A. Interacts with MYO6. Interacts (via UBAN) with ubiquitinated TFRC. Interacts with GTP-bound Rab8 (RAB8A and/or RAB8B). Interacts with TBC1D17. Interacts with TBK1. Interacts with TRAF3. Binds to linear ubiquitin chains. Interacts with LC3 family members MAP1LC3A, MAP1LC3B, GABARAP, GABARAPL1 and GABARAPL2; OPTN phosphorylation increases the association (at least with MAP1LC3B). Interacts with RAB12; the interaction may be indirect. Interacts with TBK1; this interaction leads to the Golgi localization of TBK1 and its subsequent activation. Interacts with palmitoyltransferase ZDHHC17/HIP14; the interaction does not lead to palmitoylation of OPTN. Interacts with CYLD. Interacts with TOM1; the interaction is indirect and is mediated by MYO6, which acts as a bridge between TOM1 and OPTN. Interacts with USP12; the interaction is independent of USP12 deubiquitinase activity and may be involved in regulation of autophagic flux. Post-translationally, phosphorylated by TBK1, leading to restrict bacterial proliferation in case of infection.

It is found in the cytoplasm. The protein localises to the perinuclear region. The protein resides in the golgi apparatus. Its subcellular location is the trans-Golgi network. It localises to the cytoplasmic vesicle. It is found in the autophagosome. The protein localises to the recycling endosome. Its function is as follows. Plays an important role in the maintenance of the Golgi complex, in membrane trafficking, in exocytosis, through its interaction with myosin VI and Rab8. Links myosin VI to the Golgi complex and plays an important role in Golgi ribbon formation. Negatively regulates the induction of IFNB in response to RNA virus infection. Plays a neuroprotective role in the eye and optic nerve. Probably part of the TNF-alpha signaling pathway that can shift the equilibrium toward induction of cell death. May act by regulating membrane trafficking and cellular morphogenesis via a complex that contains Rab8 and huntingtin (HD). Mediates the interaction of Rab8 with the probable GTPase-activating protein TBC1D17 during Rab8-mediated endocytic trafficking, such as that of transferrin receptor (TFRC/TfR); regulates Rab8 recruitment to tubules emanating from the endocytic recycling compartment. Autophagy receptor that interacts directly with both the cargo to become degraded and an autophagy modifier of the MAP1 LC3 family; targets ubiquitin-coated bacteria (xenophagy) and appears to function in the same pathway as SQSTM1 and CALCOCO2/NDP52. In Rattus norvegicus (Rat), this protein is Optineurin (Optn).